The chain runs to 365 residues: MSLEEKKTTESKEKDKALSLVLGQIERNFGRGSIMRLGDASRMKVETISTGALTLDLALGGGYPKGRVVEVYGPESSGKTTLTLHAIAEVQKNGGVAAFVDAEHALDPVYAASLGVDVENLLVSQPDTGEMALEIVDQLIRSSAVDLVVVDSVAALTPRAEIEGEMGDHVIGSQARLMSQAMRKITGNIGKSGCTVIFLNQLRLKIGVTYGNPETTTGGNALKFYASVRLDIRRIQTLKRGTEEYGIRAKVKVAKNKVAPPFRIAEFDILFGKGISTTGCLLDLAEETNIIIRRGAWYSYEGENIGQGRDNTIIWLDQNLEIRNKVESMVKEKLTEGTEVSSNSMKALNSNPANTIAVNDIKTVA.

73 to 80 (GPESSGKT) serves as a coordination point for ATP.

Belongs to the RecA family.

It is found in the cytoplasm. Its function is as follows. Can catalyze the hydrolysis of ATP in the presence of single-stranded DNA, the ATP-dependent uptake of single-stranded DNA by duplex DNA, and the ATP-dependent hybridization of homologous single-stranded DNAs. It interacts with LexA causing its activation and leading to its autocatalytic cleavage. The chain is Protein RecA from Prochlorococcus marinus (strain MIT 9301).